We begin with the raw amino-acid sequence, 362 residues long: Hepatic sodium/bile acid cotransporter (362 aa).

Over 1-22 (MEVHNVSAPFNFSLPPGFGHRA) the chain is Extracellular. N-linked (GlcNAc...) asparagine glycans are attached at residues asparagine 5 and asparagine 11. The helical transmembrane segment at 23-44 (TDKALSIILVLMLLLIMLSLGC) threads the bilayer. Over 45–47 (TME) the chain is Cytoplasmic. The helical transmembrane segment at 48 to 83 (FSKIKAHLWKPKGVIVALVAQFGIMPLAAFLLGKIF) threads the bilayer. Over 84–86 (HLS) the chain is Extracellular. Residues 87–112 (NIEALAILICGCSPGGNLSNLFTLAM) form a discontinuously helical membrane-spanning segment. Topologically, residues 113–115 (KGD) are cytoplasmic. Residues 116 to 142 (MNLSIVMTTCSSFSALGMMPLLLYVYS) traverse the membrane as a helical segment. Topologically, residues 143-156 (KGIYDGDLKDKVPY) are extracellular. A helical membrane pass occupies residues 157–179 (KGIMISLVIVLIPCTIGIVLKSK). At 180–183 (RPHY) the chain is on the cytoplasmic side. A helical transmembrane segment spans residues 184–217 (VPYILKGGMIITFLLSVAVTALSVINVGNSIMFV). The Extracellular portion of the chain corresponds to 218 to 219 (MT). A helical transmembrane segment spans residues 220 to 243 (PHLLATSSLMPFSGFLMGYILSAL). Over 244 to 247 (FQLN) the chain is Cytoplasmic. The chain crosses the membrane as a discontinuously helical span at residues 248–273 (PSCRRTISMETGFQNIQLCSTILNVT). The Extracellular portion of the chain corresponds to 274-280 (FPPEVIG). The chain crosses the membrane as a helical span at residues 281 to 311 (PLFFFPLLYMIFQLAEGLLIIIIFRCYEKIK). At 312 to 362 (PPKDQTKITYKAAATEDATPAALEKGTHNGNIPPLQPGPSPNGLNSGQMAN) the chain is on the cytoplasmic side. At threonine 330 the chain carries Phosphothreonine. Positions 333 to 362 (ALEKGTHNGNIPPLQPGPSPNGLNSGQMAN) are disordered. Over residues 353–362 (NGLNSGQMAN) the composition is skewed to polar residues.

Belongs to the bile acid:sodium symporter (BASS) (TC 2.A.28) family. Highly expressed in liver and low expression in kidney.

The protein resides in the cell membrane. The catalysed reaction is taurocholate(out) + 2 Na(+)(out) = taurocholate(in) + 2 Na(+)(in). The enzyme catalyses taurochenodeoxycholate(out) + 2 Na(+)(out) = taurochenodeoxycholate(in) + 2 Na(+)(in). It catalyses the reaction tauroursodeoxycholate(out) + 2 Na(+)(out) = tauroursodeoxycholate(in) + 2 Na(+)(in). It carries out the reaction glycocholate(out) + 2 Na(+)(out) = glycocholate(in) + 2 Na(+)(in). The catalysed reaction is estrone 3-sulfate(out) + 2 Na(+)(out) = estrone 3-sulfate(in) + 2 Na(+)(in). The enzyme catalyses cholate(out) + 2 Na(+)(out) = cholate(in) + 2 Na(+)(in). It catalyses the reaction tauronorcholate(out) + 2 Na(+)(out) = tauronorcholate(in) + 2 Na(+)(in). It carries out the reaction taurodeoxycholate(out) + 2 Na(+)(out) = taurodeoxycholate(in) + 2 Na(+)(in). The catalysed reaction is tauroallocholate(out) + 2 Na(+)(out) = tauroallocholate(in) + 2 Na(+)(in). The enzyme catalyses taurohyodeoxycholate(out) + 2 Na(+)(out) = taurohyodeoxycholate(in) + 2 Na(+)(in). It catalyses the reaction taurohyocholate(out) + 2 Na(+)(out) = taurohyocholate(in) + 2 Na(+)(in). It carries out the reaction tauro-beta-muricholate(out) + 2 Na(+)(out) = tauro-beta-muricholate(in) + 2 Na(+)(in). Its activity is regulated as follows. The transport of bile acids is sodium-dependent. Its function is as follows. As a major transporter of conjugated bile salts from plasma into the hepatocyte, it plays a key role in the enterohepatic circulation of bile salts necessary for the solubilization and absorption of dietary fat and fat-soluble vitamins. It is strictly dependent on the extracellular presence of sodium. It exhibits broad substrate specificity and transports various bile acids, such as taurocholate, cholate, as well as non-bile acid organic compounds, such as estrone sulfate. Works collaboratively with the ileal transporter (NTCP2), the organic solute transporter (OST), and the bile salt export pump (BSEP), to ensure efficacious biological recycling of bile acids during enterohepatic circulation. This Rattus norvegicus (Rat) protein is Hepatic sodium/bile acid cotransporter (Slc10a1).